Consider the following 237-residue polypeptide: Pheromone-regulated membrane protein 8 (237 aa).

Topologically, residues 1-47 are cytoplasmic; that stretch reads MQTPSENTNAKSDSLDEPGAYLIEENVALPKDIFHSYLSYWIYEAAH. Residues 48–68 form a helical membrane-spanning segment; it reads CTPVMLLSLVIGVLISIIILF. Over 69-74 the chain is Extracellular; it reads HDNENC. Residues 75–95 form a helical membrane-spanning segment; that stretch reads VGVSVGFLLIFSGILVIVLIL. The Cytoplasmic portion of the chain corresponds to 96–237; sequence RFGPQISDED…QEYPGVDEFF (142 aa). Positions 174-201 are disordered; sequence SSASNVKDAQSNDETAGTPNEAAESSSF. Residues 236 to 237 form a COPII binding region; it reads FF.

This sequence belongs to the DUP/COS family. Interacts with PRM9. Binds to SEC23/24 of COPII coated vesicles.

It localises to the membrane. It is found in the endoplasmic reticulum. In terms of biological role, may be involved in endoplasmic reticulum exit trafficking of proteins. The polypeptide is Pheromone-regulated membrane protein 8 (PRM8) (Saccharomyces cerevisiae (strain ATCC 204508 / S288c) (Baker's yeast)).